Here is a 347-residue protein sequence, read N- to C-terminus: Phenylalanine--tRNA ligase alpha subunit (347 aa).

Mg(2+) is bound at residue glutamate 261.

Belongs to the class-II aminoacyl-tRNA synthetase family. Phe-tRNA synthetase alpha subunit type 1 subfamily. In terms of assembly, tetramer of two alpha and two beta subunits. It depends on Mg(2+) as a cofactor.

Its subcellular location is the cytoplasm. It carries out the reaction tRNA(Phe) + L-phenylalanine + ATP = L-phenylalanyl-tRNA(Phe) + AMP + diphosphate + H(+). This is Phenylalanine--tRNA ligase alpha subunit from Streptococcus mutans serotype c (strain ATCC 700610 / UA159).